The sequence spans 479 residues: DNA polymerase IV (479 aa).

The UmuC domain occupies 7–189 (ILHLDMDAFF…MTVRTLPGVG (183 aa)). Aspartate 11 and aspartate 105 together coordinate Mg(2+). Glutamate 106 is an active-site residue. Disordered stretches follow at residues 357–400 (AGDR…GHGW) and 430–479 (DPEL…TSRP). Basic and acidic residues predominate over residues 381-396 (AERRWPSGHDVRHTEL).

This sequence belongs to the DNA polymerase type-Y family. Monomer. The cofactor is Mg(2+).

It localises to the cytoplasm. It catalyses the reaction DNA(n) + a 2'-deoxyribonucleoside 5'-triphosphate = DNA(n+1) + diphosphate. Poorly processive, error-prone DNA polymerase involved in untargeted mutagenesis. Copies undamaged DNA at stalled replication forks, which arise in vivo from mismatched or misaligned primer ends. These misaligned primers can be extended by PolIV. Exhibits no 3'-5' exonuclease (proofreading) activity. May be involved in translesional synthesis, in conjunction with the beta clamp from PolIII. This is DNA polymerase IV from Streptomyces coelicolor (strain ATCC BAA-471 / A3(2) / M145).